A 700-amino-acid chain; its full sequence is Methionine--tRNA ligase (700 aa).

The 'HIGH' region motif lies at 14 to 24 (PYANGPVHLGH). Zn(2+) contacts are provided by Cys-146, Cys-149, Cys-159, and Cys-162. Residues 343–347 (KFSKS) carry the 'KMSKS' region motif. Lys-346 contacts ATP. The region spanning 599 to 700 (EFEKIDLRVA…GDSIVGKPVK (102 aa)) is the tRNA-binding domain.

Belongs to the class-I aminoacyl-tRNA synthetase family. MetG type 1 subfamily. In terms of assembly, homodimer. Zn(2+) serves as cofactor.

The protein resides in the cytoplasm. The enzyme catalyses tRNA(Met) + L-methionine + ATP = L-methionyl-tRNA(Met) + AMP + diphosphate. In terms of biological role, is required not only for elongation of protein synthesis but also for the initiation of all mRNA translation through initiator tRNA(fMet) aminoacylation. The protein is Methionine--tRNA ligase of Chloroherpeton thalassium (strain ATCC 35110 / GB-78).